The chain runs to 357 residues: DNA replication and repair protein RecF (357 aa).

30-37 is a binding site for ATP; sequence GANGSGKT.

This sequence belongs to the RecF family.

Its subcellular location is the cytoplasm. Functionally, the RecF protein is involved in DNA metabolism; it is required for DNA replication and normal SOS inducibility. RecF binds preferentially to single-stranded, linear DNA. It also seems to bind ATP. In Salmonella heidelberg (strain SL476), this protein is DNA replication and repair protein RecF.